We begin with the raw amino-acid sequence, 526 residues long: Alpha-N-acetylgalactosaminide alpha-2,6-sialyltransferase 1 (526 aa).

Over 1 to 12 (MTRYCRGLSQRQ) the chain is Cytoplasmic. The helical; Signal-anchor for type II membrane protein transmembrane segment at 13 to 33 (AFLLLTVLALLFILLFVVKDP) threads the bilayer. Residues 34-526 (RAKDSRCQFI…QRPQSDKAKN (493 aa)) are Lumenal-facing. The segment at 49–182 (SAQENQQKAE…TRRRQRLKAS (134 aa)) is disordered. Over residues 81–106 (KDLKKQEREAVQGEQAEGKEKRKLET) the composition is skewed to basic and acidic residues. Polar residues predominate over residues 161–171 (ATKSPASSPHP). Asn-206, Asn-228, Asn-259, Asn-303, and Asn-388 each carry an N-linked (GlcNAc...) asparagine glycan. 2 disulfide bridges follow: Cys-207-Cys-290 and Cys-293-Cys-461.

This sequence belongs to the glycosyltransferase 29 family. Glycosylated; autosialylated. In terms of tissue distribution, submaxillary gland, mammary gland, spleen and colon.

The protein resides in the golgi apparatus membrane. The catalysed reaction is a beta-D-galactosyl-(1-&gt;3)-N-acetyl-alpha-D-galactosaminyl derivative + CMP-N-acetyl-beta-neuraminate = a beta-D-galactosyl-(1-&gt;3)-[N-acetyl-alpha-neuraminyl-(2-&gt;6)]-N-acetyl-alpha-D-galactosaminyl derivative + CMP + H(+). It carries out the reaction a 3-O-[N-acetyl-alpha-D-galactosaminyl]-L-seryl-[protein] + CMP-N-acetyl-beta-neuraminate = a 3-O-[N-acetyl-alpha-neuraminosyl-(2-&gt;6)-N-acetyl-alpha-D-galactosaminyl]-L-seryl-[protein] + CMP + H(+). The enzyme catalyses a 3-O-[N-acetyl-alpha-D-galactosaminyl]-L-threonyl-[protein] + CMP-N-acetyl-beta-neuraminate = a 3-O-[N-acetyl-alpha-neuraminosyl-(2-&gt;6)-N-acetyl-alpha-D-galactosaminyl]-L-threonyl-[protein] + CMP + H(+). It catalyses the reaction a 3-O-[beta-D-galactosyl-(1-&gt;3)-N-acetyl-alpha-D-galactosaminyl]-L-seryl-[protein] + CMP-N-acetyl-beta-neuraminate = a 3-O-{beta-D-galactosyl-(1-&gt;3)-[N-acetyl-alpha-neuraminosyl-(2-&gt;6)]-N-acetyl-alpha-D-galactosaminyl}-L-seryl-[protein] + CMP + H(+). The catalysed reaction is a 3-O-[beta-D-galactosyl-(1-&gt;3)-N-acetyl-alpha-D-galactosaminyl]-L-threonyl-[protein] + CMP-N-acetyl-beta-neuraminate = a 3-O-{beta-D-galactosyl-(1-&gt;3)-[N-acetyl-alpha-neuraminosyl-(2-&gt;6)]-N-acetyl-alpha-D-galactosaminyl}-L-threonyl-[protein] + CMP + H(+). It carries out the reaction a 3-O-[N-acetyl-alpha-neuraminyl-(2-&gt;3)-beta-D-galactosyl-(1-&gt;3)-N-acetyl-alpha-D-galactosaminyl]-L-threonyl-[protein] + CMP-N-acetyl-beta-neuraminate = a 3-O-{alpha-Neu5Ac-(2-&gt;3)-beta-D-Gal-(1-&gt;3)-[alpha-Neu5Ac-(2-&gt;6)]-alpha-D-GalNAc}-L-threonyl-[protein] + CMP + H(+). The protein operates within protein modification; protein glycosylation. In terms of biological role, protein sialyltransferase specifically expressed in goblet cells that plays a key role in intestinal host-commensal homeostasis. Conjugates sialic acid with an alpha-2-6 linkage to N-acetylgalactosamine (GalNAc) glycan chains linked to serine or threonine in glycoproteins. Catalyzes the formation of the sialyl-Tn (S-Tn) antigen, an antigen found in intestinal goblet cells. Protein sialylation in globlet cells is essential for mucus integrity and is required to protect the intestinal mucus against excessive bacterial proteolytic degradation. This chain is Alpha-N-acetylgalactosaminide alpha-2,6-sialyltransferase 1, found in Mus musculus (Mouse).